The sequence spans 21 residues: Cardiotoxin-like basic polypeptide ah (21 aa).

This sequence belongs to the three-finger toxin family. Short-chain subfamily. Orphan group XV sub-subfamily. Post-translationally, contains 4 disulfide bonds. As to expression, expressed by the venom gland.

It localises to the secreted. The protein resides in the target cell membrane. Functionally, has hemolytic activity under low-lecithin conditions. Has low cytotoxic activity. Inhibits the expression of VEGF and bFGF in human non-small-cell lung cancer cell line NCI-H1299 in a dose-dependent manner. The polypeptide is Cardiotoxin-like basic polypeptide ah (Naja atra (Chinese cobra)).